Consider the following 419-residue polypeptide: Peptide chain release factor subunit 1 (419 aa).

The protein belongs to the eukaryotic release factor 1 family. Heterodimer of two subunits, one of which binds GTP.

The protein localises to the cytoplasm. Its function is as follows. Directs the termination of nascent peptide synthesis (translation) in response to the termination codons UAA, UAG and UGA. The polypeptide is Peptide chain release factor subunit 1 (Methanococcus vannielii (strain ATCC 35089 / DSM 1224 / JCM 13029 / OCM 148 / SB)).